The following is a 411-amino-acid chain: Peptidase T (411 aa).

H79 lines the Zn(2+) pocket. Residue D81 is part of the active site. Position 142 (D142) interacts with Zn(2+). E176 serves as the catalytic Proton acceptor. Zn(2+)-binding residues include E177, D199, and H381.

This sequence belongs to the peptidase M20B family. Requires Zn(2+) as cofactor.

The protein resides in the cytoplasm. The catalysed reaction is Release of the N-terminal residue from a tripeptide.. In terms of biological role, cleaves the N-terminal amino acid of tripeptides. This chain is Peptidase T, found in Exiguobacterium sibiricum (strain DSM 17290 / CCUG 55495 / CIP 109462 / JCM 13490 / 255-15).